The following is a 377-amino-acid chain: WAT1-related protein At5g13670 (377 aa).

Transmembrane regions (helical) follow at residues 9–29 (FIAI…AKLA), 38–58 (VLVA…ALIL), 64–84 (PKLT…EPVV), 99–119 (TFTS…ACVF), 136–156 (VGTM…GNVI), 187–207 (IMLV…AKIL), 214–234 (LSLT…MGLI), 251–271 (LLAS…IGWA), 279–299 (FVSA…TFVF), and 303–323 (VYVG…LVLW). 2 EamA domains span residues 18 to 149 (LYAL…MLMT) and 194 to 322 (FSWS…YLVL).

The protein belongs to the drug/metabolite transporter (DMT) superfamily. Plant drug/metabolite exporter (P-DME) (TC 2.A.7.4) family.

It is found in the membrane. In Arabidopsis thaliana (Mouse-ear cress), this protein is WAT1-related protein At5g13670.